The sequence spans 105 residues: Large ribosomal subunit protein uL24 (105 aa).

It belongs to the universal ribosomal protein uL24 family. In terms of assembly, part of the 50S ribosomal subunit.

Functionally, one of two assembly initiator proteins, it binds directly to the 5'-end of the 23S rRNA, where it nucleates assembly of the 50S subunit. One of the proteins that surrounds the polypeptide exit tunnel on the outside of the subunit. This is Large ribosomal subunit protein uL24 from Marinomonas sp. (strain MWYL1).